The primary structure comprises 764 residues: 1,4-alpha-glucan branching enzyme GlgB (764 aa).

Residue D431 is the Nucleophile of the active site. The active-site Proton donor is the E484.

Belongs to the glycosyl hydrolase 13 family. GlgB subfamily. As to quaternary structure, monomer.

The catalysed reaction is Transfers a segment of a (1-&gt;4)-alpha-D-glucan chain to a primary hydroxy group in a similar glucan chain.. It functions in the pathway glycan biosynthesis; glycogen biosynthesis. Functionally, catalyzes the formation of the alpha-1,6-glucosidic linkages in glycogen by scission of a 1,4-alpha-linked oligosaccharide from growing alpha-1,4-glucan chains and the subsequent attachment of the oligosaccharide to the alpha-1,6 position. The protein is 1,4-alpha-glucan branching enzyme GlgB of Synechococcus sp. (strain CC9902).